Here is a 704-residue protein sequence, read N- to C-terminus: Elongation factor G (704 aa).

One can recognise a tr-type G domain in the interval 8–291 (DKVRNIGIMA…AVVDYLASPL (284 aa)). GTP is bound by residues 17-24 (AHIDAGKT), 90-94 (DTPGH), and 144-147 (NKMD).

The protein belongs to the TRAFAC class translation factor GTPase superfamily. Classic translation factor GTPase family. EF-G/EF-2 subfamily.

It localises to the cytoplasm. Its function is as follows. Catalyzes the GTP-dependent ribosomal translocation step during translation elongation. During this step, the ribosome changes from the pre-translocational (PRE) to the post-translocational (POST) state as the newly formed A-site-bound peptidyl-tRNA and P-site-bound deacylated tRNA move to the P and E sites, respectively. Catalyzes the coordinated movement of the two tRNA molecules, the mRNA and conformational changes in the ribosome. This chain is Elongation factor G, found in Chlorobium luteolum (strain DSM 273 / BCRC 81028 / 2530) (Pelodictyon luteolum).